A 378-amino-acid chain; its full sequence is Cysteine synthase (378 aa).

The tract at residues 10–31 (NSEGDSNQQQNNNNNSNNNLKE) is disordered. Positions 15–28 (SNQQQNNNNNSNNN) are enriched in low complexity. Residue Lys-79 is modified to N6-(pyridoxal phosphate)lysine. Residues 215-219 (GTGGT) and Ser-319 contribute to the pyridoxal 5'-phosphate site.

This sequence belongs to the cysteine synthase/cystathionine beta-synthase family. It depends on pyridoxal 5'-phosphate as a cofactor.

The enzyme catalyses O-acetyl-L-serine + hydrogen sulfide = L-cysteine + acetate. It participates in amino-acid biosynthesis; L-cysteine biosynthesis; L-cysteine from L-serine: step 2/2. This is Cysteine synthase (cysK) from Dictyostelium discoideum (Social amoeba).